The primary structure comprises 328 residues: Malate dehydrogenase (328 aa).

11–17 (GAAGQIG) serves as a coordination point for NAD(+). Residues Arg-94 and Arg-100 each coordinate substrate. Residues Asn-107, Gln-114, and 131–133 (VGN) contribute to the NAD(+) site. 2 residues coordinate substrate: Asn-133 and Arg-164. Residue His-189 is the Proton acceptor of the active site.

Belongs to the LDH/MDH superfamily. MDH type 2 family.

The catalysed reaction is (S)-malate + NAD(+) = oxaloacetate + NADH + H(+). Functionally, catalyzes the reversible oxidation of malate to oxaloacetate. This is Malate dehydrogenase from Acinetobacter baylyi (strain ATCC 33305 / BD413 / ADP1).